A 283-amino-acid chain; its full sequence is BTB/POZ domain-containing protein KCTD15 (283 aa).

Residues 1–32 (MPHRKERPSGSSLHTHGSTGTAEGGNMSRLSL) are disordered. The span at 9–21 (SGSSLHTHGSTGT) shows a compositional bias: low complexity. 3 positions are modified to phosphoserine: Ser31, Ser35, and Ser38. Residues 56 to 126 (APVHIDVGGH…LRTSKLLLPD (71 aa)) form the BTB domain.

Forms oligomers, predominantly homopentamers. Interacts with KCTD1, probably forming heteropentamers depending on its abundance in a cell-type dependent manner. Interacts with TFAP2A; this interaction inhibits TFAP2A transcriptional activation.

It is found in the nucleus. Its function is as follows. During embryonic development, it is involved in neural crest formation. Inhibits AP2 transcriptional activity by interaction with its activation domain. This is BTB/POZ domain-containing protein KCTD15 (KCTD15) from Homo sapiens (Human).